The sequence spans 397 residues: MNYAYPDEKGHYGIYGGRYVPETLMQSVLELEEAYKEAMEDEEFQKELNHYLKTYVGRETPLYFAENMTKYCGGAKIYLKREDLNHTGAHKINNTIGQALLAVRMGKKKVVAETGAGQHGVATATVCALLGLECVIFMGEEDVRRQKLNVFRMELLGAKVESVAAGSGTLKDAVNEALRYWVSHVHDTHYIMGSVLGPHPFPQIVRDFQSVIGNETKKQYEALEGKLPEAVVACIGGGSNAMGMFYPFVHDEEVALYGVEAAGKGVHTEKHAATLTKGSVGVLHGSMMYLLQNEEGQIQEAHSISAGLDYPGVGPEHSLLKDIGRVSYHSITDDEALEAFQLLTKKEGIIPALESSHAVAYALKLAPQMKKDEGLVICLSGRGDKDVESIKRYMEEV.

Lys91 is subject to N6-(pyridoxal phosphate)lysine.

This sequence belongs to the TrpB family. As to quaternary structure, tetramer of two alpha and two beta chains. Requires pyridoxal 5'-phosphate as cofactor.

It carries out the reaction (1S,2R)-1-C-(indol-3-yl)glycerol 3-phosphate + L-serine = D-glyceraldehyde 3-phosphate + L-tryptophan + H2O. It functions in the pathway amino-acid biosynthesis; L-tryptophan biosynthesis; L-tryptophan from chorismate: step 5/5. Its function is as follows. The beta subunit is responsible for the synthesis of L-tryptophan from indole and L-serine. The polypeptide is Tryptophan synthase beta chain (Bacillus cereus (strain Q1)).